The following is a 245-amino-acid chain: tRNA (guanine-N(7)-)-methyltransferase (245 aa).

The S-adenosyl-L-methionine site is built by Glu-75, Glu-100, Asp-127, and Asp-150. Asp-150 is an active-site residue. Substrate contacts are provided by residues Lys-154, Asp-186, and Thr-223 to Glu-226.

Belongs to the class I-like SAM-binding methyltransferase superfamily. TrmB family.

It carries out the reaction guanosine(46) in tRNA + S-adenosyl-L-methionine = N(7)-methylguanosine(46) in tRNA + S-adenosyl-L-homocysteine. Its pathway is tRNA modification; N(7)-methylguanine-tRNA biosynthesis. In terms of biological role, catalyzes the formation of N(7)-methylguanine at position 46 (m7G46) in tRNA. The chain is tRNA (guanine-N(7)-)-methyltransferase from Photobacterium profundum (strain SS9).